A 338-amino-acid polypeptide reads, in one-letter code: Nicotinate-nucleotide--dimethylbenzimidazole phosphoribosyltransferase (338 aa).

E305 (proton acceptor) is an active-site residue.

This sequence belongs to the CobT family.

The enzyme catalyses 5,6-dimethylbenzimidazole + nicotinate beta-D-ribonucleotide = alpha-ribazole 5'-phosphate + nicotinate + H(+). The protein operates within nucleoside biosynthesis; alpha-ribazole biosynthesis; alpha-ribazole from 5,6-dimethylbenzimidazole: step 1/2. Its function is as follows. Catalyzes the synthesis of alpha-ribazole-5'-phosphate from nicotinate mononucleotide (NAMN) and 5,6-dimethylbenzimidazole (DMB). This is Nicotinate-nucleotide--dimethylbenzimidazole phosphoribosyltransferase from Rhizobium etli (strain ATCC 51251 / DSM 11541 / JCM 21823 / NBRC 15573 / CFN 42).